We begin with the raw amino-acid sequence, 498 residues long: ATP synthase subunit beta, chloroplastic (498 aa).

An ATP-binding site is contributed by 172–179 (GGAGVGKT).

It belongs to the ATPase alpha/beta chains family. In terms of assembly, F-type ATPases have 2 components, CF(1) - the catalytic core - and CF(0) - the membrane proton channel. CF(1) has five subunits: alpha(3), beta(3), gamma(1), delta(1), epsilon(1). CF(0) has four main subunits: a(1), b(1), b'(1) and c(9-12).

The protein resides in the plastid. It localises to the chloroplast thylakoid membrane. It catalyses the reaction ATP + H2O + 4 H(+)(in) = ADP + phosphate + 5 H(+)(out). Produces ATP from ADP in the presence of a proton gradient across the membrane. The catalytic sites are hosted primarily by the beta subunits. The sequence is that of ATP synthase subunit beta, chloroplastic from Schisandra sphenanthera (Southern magnolia vine).